The following is a 119-amino-acid chain: Small polypeptide DEVIL 24 (119 aa).

The interval 83 to 114 (SFTSKCTSLMKQQHARLCIIRLCATMLLRSYT) is required for DVL/RTFL small polypeptide activity. A helical transmembrane segment spans residues 96–113 (HARLCIIRLCATMLLRSY).

This sequence belongs to the DVL/RTFL small polypeptides family.

The protein resides in the cell membrane. Small polypeptide acting as a regulatory molecule which coordinates cellular responses required for differentiation, growth and development, probably by restricting polar cell proliferation in lateral organs and coordinating socket cell recruitment and differentiation at trichome sites. In Arabidopsis thaliana (Mouse-ear cress), this protein is Small polypeptide DEVIL 24.